Consider the following 51-residue polypeptide: Large ribosomal subunit protein bL33 (51 aa).

This sequence belongs to the bacterial ribosomal protein bL33 family.

The sequence is that of Large ribosomal subunit protein bL33 from Pseudoalteromonas translucida (strain TAC 125).